The chain runs to 254 residues: Dolichol-phosphate mannosyltransferase subunit 1 (254 aa).

Residues Pro25, Tyr27, Glu29, Val56, Asp58, Asp111, Ala112, Asp113, Arg140, and Arg227 each contribute to the GDP-alpha-D-mannose site. Asp113 contributes to the Mg(2+) binding site. Mn(2+) is bound at residue Asp113.

The protein belongs to the glycosyltransferase 2 family. In terms of assembly, component of the dolichol-phosphate mannose (DPM) synthase complex composed of dpm1, dpm2 and dpm3. Requires Mg(2+) as cofactor. Mn(2+) serves as cofactor. It depends on Ca(2+) as a cofactor.

It is found in the endoplasmic reticulum. The catalysed reaction is a di-trans,poly-cis-dolichyl phosphate + GDP-alpha-D-mannose = a di-trans,poly-cis-dolichyl beta-D-mannosyl phosphate + GDP. It participates in protein modification; protein glycosylation. In terms of biological role, transfers mannose from GDP-mannose to dolichol monophosphate to form dolichol phosphate mannose (Dol-P-Man) which is the mannosyl donor in pathways leading to N-glycosylation, glycosyl phosphatidylinositol membrane anchoring, and O-mannosylation of proteins; catalytic subunit of the dolichol-phosphate mannose (DPM) synthase complex. This is Dolichol-phosphate mannosyltransferase subunit 1 (dpm1) from Dictyostelium discoideum (Social amoeba).